The following is a 485-amino-acid chain: Silicon efflux transporter LSI3 (485 aa).

5 helical membrane-spanning segments follow: residues 14–34 (VAFG…LPIG), 37–57 (AGAL…ADDA), 59–79 (ASID…GGYL), 106–126 (VCVV…CVVL), and 180–200 (FLLG…LMLL). Basic and acidic residues predominate over residues 233 to 242 (ALNNNKKDDG). The disordered stretch occupies residues 233–261 (ALNNNKKDDGDAATPASPEDDDGGDAESM). Helical transmembrane passes span 283–303 (LFLK…YMLG), 336–356 (LLVF…TGLP), 377–397 (VLSV…TVLL), 418–438 (WLLL…GSAA), and 461–481 (HVIF…PLIG).

This sequence belongs to the arsenite-antimonite (ArsB) efflux (TC 2.A.45) family.

The protein resides in the cell membrane. Functionally, silicon efflux transporter involved in silicon transport in shoots. In the nodes, involved with LSI2 and NIP2-2/LSI6 in silicon intervascular transfer, which is required for the preferential distribution of silicon, such as hyperaccumulation of silicon in the husk. Silicon is beneficial to plant growth and helps plants to overcome abiotic and biotic stresses by preventing lodging (falling over) and increasing resistance to pests and diseases, as well as other stresses. The polypeptide is Silicon efflux transporter LSI3 (Oryza sativa subsp. japonica (Rice)).